A 2586-amino-acid polypeptide reads, in one-letter code: Vitellogenin (2586 aa).

An N-terminal signal peptide occupies residues 1 to 18; it reads MTTSTLLFVLAFVAGGLA. The region spanning 42 to 653 is the Vitellogenin domain; the sequence is YQPDKTYAYA…APGSFVPRAV (612 aa). 2 disulfide bridges follow: Cys170/Cys194 and Cys2378/Cys2515. The VWFD domain maps to 2353–2516; sequence RTATVVGGSE…AAWQEDRQCS (164 aa).

Post-translationally, glycosylated. In terms of processing, may be modified covalently by lipidation. In terms of tissue distribution, expressed in the ovary and hepatopancrease of vitellogenic females. Not expressed in the muscle, heart and intestine of female or in the hepatopancrease of the male. Detected in the ovary and hemolymph of female (at protein level). Not detected in the female hepatopancreas or in the male hemolymph and testis (at protein level).

Its function is as follows. Precursor of the egg-yolk proteins that are sources of nutrients during embryonic development. The protein is Vitellogenin of Penaeus merguiensis (Banana prawn).